We begin with the raw amino-acid sequence, 900 residues long: MAPAKKREKDSNPDGSAANGIIGLTHGAPDASNAGSTVPPTAEGQVKLNGHQQEQELFLQAFEKPTQIYRYLRNRHETNPIFLNRTLSYMKERMSRNNKKRISFQVNSMLESITQKSEAVSQNYLHVIYDSLHEKLPARLDNESGEDLLQEQLLCEAGESVSVETTLYKITRSKRKDSTLDFQELLSKCSQIVYNPKDRVGEHATISIPLQTMRPMGEQHTLYKLLFRIKVLSPSTCNDENAETPPNKRSRPNEKMFGSELILYEKSSGFITEGEYEAMLQPLNSTSIKSFSPKKCTWETMPDSYIPLSLTYDVYQQSPMLKFHLTLSNEQLPEMISAPELQRYVQHLDAVAEMNYNNNNYNNNNNCSGLKNGSGGGNSTVCKTTPEHIQIVYNFMYSNNTRQQTEYTQELNCPWCGLDCLRLYALLKHLKLCHARFNFTYQPAGSGARIDVTINDAYDGSYAGSPYDLAGPSGSSFARTCGPVRRTSVTSLMVCRPRRQKTCLDEFLELDEDEISNQRSYITGHNRLYHHTETCLPVHPKELDIDSEGESDPLWLRQKTIQMIDEFSDVNEGEKELMKLWNLHVMRHGFVGDCQLPIACEMFLDAKGTEIVRKNLYRNFILHMCSLFDYGLIAAETVYKTVQKLQGLLSKYAAGQELMQRQREEQLKYWLDVGMHKKQEDPKTLKSPQKPAPPADQASTSSASTSGSGSGSSSMQPPKRMPAHLKRGSAASSPGVQSKGTENGTNGSNSSSSNSKNVAKKSADQPLSTLANTRERRSEYGQKRNVSGSRLAATPASKRKLSSKDNTVLNKRQRYSDGSPGTGIGNGHGGGSGSGANRNKSNNHSLPATSNNASSSSSNSKRAIARRRSTSERTKASGSTGGGAGGVRTRLSVPAKYERR.

Over residues 1-12 (MAPAKKREKDSN) the composition is skewed to basic and acidic residues. Residues 1-44 (MAPAKKREKDSNPDGSAANGIIGLTHGAPDASNAGSTVPPTAEG) form a disordered region. The C2H2-type zinc-finger motif lies at 411-434 (LNCPWCGLDCLRLYALLKHLKLCH). The tract at residues 527–603 (RLYHHTETCL…CQLPIACEMF (77 aa)) is VEFS-box. Serine 547 is modified (phosphoserine). The tract at residues 678 to 900 (KQEDPKTLKS…LSVPAKYERR (223 aa)) is disordered. Composition is skewed to low complexity over residues 698–714 (ASTSSASTSGSGSGSSS) and 738–757 (SKGTENGTNGSNSSSSNSKN). Positions 773–782 (TRERRSEYGQ) are enriched in basic and acidic residues. Residues 820–834 (PGTGIGNGHGGGSGS) are compositionally biased toward gly residues. The segment covering 850 to 862 (SNNASSSSSNSKR) has biased composition (low complexity).

The protein belongs to the VEFS (VRN2-EMF2-FIS2-SU(Z)12) family. In terms of assembly, component of the polycomb repressive complex 2 (PRC2, also known as the Esc/E(Z) complex), composed of Caf1-55, esc, E(z), Su(z)12, and possibly pho. PRC2 associates with the accessory components Jarid2 and jing to form the PRC2 Jarid2-jing variant (PRC2.2). PRC2 may also associate with Pcl and HDAC1/Rpd3 during early embryogenesis. This complex is distinct from the PRC1 complex, which contains many other PcG proteins like Pc, Ph, Psc, Su(z)2. The two complexes however cooperate and interact together during the first 3 hours of development to establish PcG silencing.

Its subcellular location is the nucleus. The protein localises to the chromosome. Polycomb group (PcG) protein. While PcG proteins are generally required to maintain the transcriptionally repressive state of homeotic genes throughout development, this protein is specifically required during the first 6 hours of embryogenesis to establish the repressed state. Component of the Esc/E(z) complex, which methylates 'Lys-9' (H3K9me) and 'Lys-27' (H3K27me) of histone H3, leading to transcriptional repression of the affected target gene. The Esc/E(z) complex is necessary but not sufficient for the repression of homeotic target genes, suggesting that the recruitment of the distinct PRC1 complex is also required. The protein is Polycomb protein Su(z)12 (Su(z)12) of Drosophila melanogaster (Fruit fly).